The chain runs to 88 residues: Small ribosomal subunit protein uS17 (88 aa).

Belongs to the universal ribosomal protein uS17 family. In terms of assembly, part of the 30S ribosomal subunit.

In terms of biological role, one of the primary rRNA binding proteins, it binds specifically to the 5'-end of 16S ribosomal RNA. The polypeptide is Small ribosomal subunit protein uS17 (Pseudomonas fluorescens (strain ATCC BAA-477 / NRRL B-23932 / Pf-5)).